A 211-amino-acid polypeptide reads, in one-letter code: MMSGEYGDFNNTNNKELSLLDKLKKAWINEKYAPNLLNYEDVIIKEVMEKIEEKESLCASAISNINLQFTANIYEMEIERLKYIIKCYLVQRIKKIDKFYSSILLEIENDEYDSYKLLSEFEINYCQKYKALMDGYFKNTLLNSIPKDFQKMDSNSINRPFLNTFVFCKPREDLGDFLVDDETIDFKKTSIYFLKYLPIKSLVEGGKMDLI.

This sequence belongs to the GINS4/SLD5 family. In terms of assembly, component of the GINS complex which is a heterotetramer of gins1, gins2, gins3 and gins4.

Its subcellular location is the nucleus. Its function is as follows. The GINS complex plays an essential role in the initiation of DNA replication. This Dictyostelium discoideum (Social amoeba) protein is DNA replication complex GINS protein SLD5 (gins4).